Consider the following 94-residue polypeptide: Putative membrane protein insertion efficiency factor (94 aa).

Belongs to the UPF0161 family.

Its subcellular location is the cell inner membrane. In terms of biological role, could be involved in insertion of integral membrane proteins into the membrane. The chain is Putative membrane protein insertion efficiency factor from Albidiferax ferrireducens (strain ATCC BAA-621 / DSM 15236 / T118) (Rhodoferax ferrireducens).